A 272-amino-acid chain; its full sequence is Probable feruloyl esterase C (272 aa).

A signal peptide spans 1-22; it reads MLPTILYSAILALSALTPSALA.

The protein belongs to the faeC family.

Its subcellular location is the secreted. The catalysed reaction is feruloyl-polysaccharide + H2O = ferulate + polysaccharide.. Its function is as follows. Involved in degradation of plant cell walls. Hydrolyzes the feruloyl-arabinose ester bond in arabinoxylans, and the feruloyl-galactose ester bond in pectin. Active against paranitrophenyl-acetate, methyl ferulate and wheat arabinoxylan. The sequence is that of Probable feruloyl esterase C (faeC-1) from Aspergillus clavatus (strain ATCC 1007 / CBS 513.65 / DSM 816 / NCTC 3887 / NRRL 1 / QM 1276 / 107).